A 312-amino-acid polypeptide reads, in one-letter code: Pyrimidine-specific ribonucleoside hydrolase RihA (312 aa).

His-240 is a catalytic residue.

The protein belongs to the IUNH family. RihA subfamily.

Its function is as follows. Hydrolyzes cytidine or uridine to ribose and cytosine or uracil, respectively. The chain is Pyrimidine-specific ribonucleoside hydrolase RihA from Shewanella woodyi (strain ATCC 51908 / MS32).